Here is a 542-residue protein sequence, read N- to C-terminus: Protein MPA43 (542 aa).

In Saccharomyces cerevisiae (strain ATCC 204508 / S288c) (Baker's yeast), this protein is Protein MPA43 (MPA43).